Reading from the N-terminus, the 79-residue chain is Exodeoxyribonuclease 7 small subunit (79 aa).

This sequence belongs to the XseB family. In terms of assembly, heterooligomer composed of large and small subunits.

The protein resides in the cytoplasm. It catalyses the reaction Exonucleolytic cleavage in either 5'- to 3'- or 3'- to 5'-direction to yield nucleoside 5'-phosphates.. In terms of biological role, bidirectionally degrades single-stranded DNA into large acid-insoluble oligonucleotides, which are then degraded further into small acid-soluble oligonucleotides. The sequence is that of Exodeoxyribonuclease 7 small subunit from Lactococcus lactis subsp. cremoris (strain SK11).